The sequence spans 1387 residues: DNA-directed RNA polymerase subunit beta'' (1387 aa).

Residues Cys-220, Cys-291, Cys-298, and Cys-301 each contribute to the Zn(2+) site.

Belongs to the RNA polymerase beta' chain family. RpoC2 subfamily. As to quaternary structure, in plastids the minimal PEP RNA polymerase catalytic core is composed of four subunits: alpha, beta, beta', and beta''. When a (nuclear-encoded) sigma factor is associated with the core the holoenzyme is formed, which can initiate transcription. Zn(2+) serves as cofactor.

The protein resides in the plastid. It localises to the chloroplast. The enzyme catalyses RNA(n) + a ribonucleoside 5'-triphosphate = RNA(n+1) + diphosphate. In terms of biological role, DNA-dependent RNA polymerase catalyzes the transcription of DNA into RNA using the four ribonucleoside triphosphates as substrates. This is DNA-directed RNA polymerase subunit beta'' from Carica papaya (Papaya).